Here is a 330-residue protein sequence, read N- to C-terminus: RNA polymerase sigma factor RpoS (330 aa).

Residues 56-89 (DATQLYLGEIGYSPLLTAEEEVYFARRALRGDVA) are sigma-70 factor domain-1. Positions 94 to 164 (MIESNLRLVV…ERAIMNQTRT (71 aa)) are sigma-70 factor domain-2. Residues 118–121 (DLIE) carry the Interaction with polymerase core subunit RpoC motif. The sigma-70 factor domain-3 stretch occupies residues 174–249 (ELNVYLRTAR…DEKENGPEDT (76 aa)). The tract at residues 262–315 (WLFELNAKQREVLARRFGLLGYEAATLEDVGREIGLTRERVRQIQVEGLRRLRE) is sigma-70 factor domain-4. The segment at residues 288–307 (LEDVGREIGLTRERVRQIQV) is a DNA-binding region (H-T-H motif).

This sequence belongs to the sigma-70 factor family. RpoS subfamily. Interacts with the RNA polymerase core enzyme and RssB.

The protein localises to the cytoplasm. Sigma factors are initiation factors that promote the attachment of RNA polymerase to specific initiation sites and are then released. This sigma factor is the master transcriptional regulator of the stationary phase and the general stress response. Controls, positively or negatively, the expression of several hundred genes, which are mainly involved in metabolism, transport, regulation and stress management. Functionally, protects stationary phase cells from killing induced by endoribonuclease MazF. The protein is RNA polymerase sigma factor RpoS of Escherichia coli (strain K12).